Consider the following 401-residue polypeptide: Formate-dependent phosphoribosylglycinamide formyltransferase (401 aa).

N(1)-(5-phospho-beta-D-ribosyl)glycinamide-binding positions include 27 to 28 (EL) and Glu87. ATP is bound by residues Arg119, Lys160, 165 to 170 (SSGKGQ), 200 to 203 (EELV), and Glu208. Positions 124–313 (EFAAEEVGVT…QFDLHLRAIL (190 aa)) constitute an ATP-grasp domain. 2 residues coordinate Mg(2+): Glu272 and Glu284. N(1)-(5-phospho-beta-D-ribosyl)glycinamide contacts are provided by residues Asp291, Lys361, and 368–369 (RR).

The protein belongs to the PurK/PurT family. In terms of assembly, homodimer.

The enzyme catalyses N(1)-(5-phospho-beta-D-ribosyl)glycinamide + formate + ATP = N(2)-formyl-N(1)-(5-phospho-beta-D-ribosyl)glycinamide + ADP + phosphate + H(+). Its pathway is purine metabolism; IMP biosynthesis via de novo pathway; N(2)-formyl-N(1)-(5-phospho-D-ribosyl)glycinamide from N(1)-(5-phospho-D-ribosyl)glycinamide (formate route): step 1/1. Its function is as follows. Involved in the de novo purine biosynthesis. Catalyzes the transfer of formate to 5-phospho-ribosyl-glycinamide (GAR), producing 5-phospho-ribosyl-N-formylglycinamide (FGAR). Formate is provided by PurU via hydrolysis of 10-formyl-tetrahydrofolate. This chain is Formate-dependent phosphoribosylglycinamide formyltransferase, found in Haloquadratum walsbyi (strain DSM 16790 / HBSQ001).